Consider the following 344-residue polypeptide: uncharacterized protein (344 aa).

This sequence belongs to the glycosyltransferase 2 family.

This is an uncharacterized protein from Escherichia coli (strain K12).